We begin with the raw amino-acid sequence, 427 residues long: UPF0229 protein YeaH (427 aa).

Positions 87–110 are disordered; that stretch reads RIERSQGGGGGSGSGQGQASQDGE. Residues 92-102 show a composition bias toward gly residues; sequence QGGGGGSGSGQ.

It belongs to the UPF0229 family.

This is UPF0229 protein YeaH from Escherichia coli O6:K15:H31 (strain 536 / UPEC).